The following is a 325-amino-acid chain: 4-hydroxy-3-methylbut-2-enyl diphosphate reductase (325 aa).

Cys13 contributes to the [4Fe-4S] cluster binding site. His42 and His76 together coordinate (2E)-4-hydroxy-3-methylbut-2-enyl diphosphate. His42 and His76 together coordinate dimethylallyl diphosphate. Positions 42 and 76 each coordinate isopentenyl diphosphate. Residue Cys98 coordinates [4Fe-4S] cluster. His126 is a binding site for (2E)-4-hydroxy-3-methylbut-2-enyl diphosphate. Residue His126 participates in dimethylallyl diphosphate binding. His126 is an isopentenyl diphosphate binding site. Residue Glu128 is the Proton donor of the active site. Thr169 provides a ligand contact to (2E)-4-hydroxy-3-methylbut-2-enyl diphosphate. Cys230 serves as a coordination point for [4Fe-4S] cluster. (2E)-4-hydroxy-3-methylbut-2-enyl diphosphate-binding residues include Ser258, Ser259, Asn260, and Ser306. 4 residues coordinate dimethylallyl diphosphate: Ser258, Ser259, Asn260, and Ser306. Residues Ser258, Ser259, Asn260, and Ser306 each coordinate isopentenyl diphosphate.

Belongs to the IspH family. Requires [4Fe-4S] cluster as cofactor.

The enzyme catalyses isopentenyl diphosphate + 2 oxidized [2Fe-2S]-[ferredoxin] + H2O = (2E)-4-hydroxy-3-methylbut-2-enyl diphosphate + 2 reduced [2Fe-2S]-[ferredoxin] + 2 H(+). The catalysed reaction is dimethylallyl diphosphate + 2 oxidized [2Fe-2S]-[ferredoxin] + H2O = (2E)-4-hydroxy-3-methylbut-2-enyl diphosphate + 2 reduced [2Fe-2S]-[ferredoxin] + 2 H(+). Its pathway is isoprenoid biosynthesis; dimethylallyl diphosphate biosynthesis; dimethylallyl diphosphate from (2E)-4-hydroxy-3-methylbutenyl diphosphate: step 1/1. The protein operates within isoprenoid biosynthesis; isopentenyl diphosphate biosynthesis via DXP pathway; isopentenyl diphosphate from 1-deoxy-D-xylulose 5-phosphate: step 6/6. In terms of biological role, catalyzes the conversion of 1-hydroxy-2-methyl-2-(E)-butenyl 4-diphosphate (HMBPP) into a mixture of isopentenyl diphosphate (IPP) and dimethylallyl diphosphate (DMAPP). Acts in the terminal step of the DOXP/MEP pathway for isoprenoid precursor biosynthesis. In Chlorobium phaeobacteroides (strain BS1), this protein is 4-hydroxy-3-methylbut-2-enyl diphosphate reductase.